The primary structure comprises 398 residues: Cytochrome P450 165B3 (398 aa).

C347 contacts heme.

Belongs to the cytochrome P450 family. Heme is required as a cofactor.

Its pathway is antibiotic biosynthesis; vancomycin biosynthesis. Functionally, involved in the coupling of aromatic side chains of the heptapeptide of vancomycin. This is Cytochrome P450 165B3 (cyp165B3) from Amycolatopsis orientalis (Nocardia orientalis).